A 130-amino-acid chain; its full sequence is Small ribosomal subunit protein uS11 (130 aa).

The protein belongs to the universal ribosomal protein uS11 family. As to quaternary structure, part of the 30S ribosomal subunit. Interacts with proteins S7 and S18. Binds to IF-3.

Located on the platform of the 30S subunit, it bridges several disparate RNA helices of the 16S rRNA. Forms part of the Shine-Dalgarno cleft in the 70S ribosome. This is Small ribosomal subunit protein uS11 from Buchnera aphidicola subsp. Cinara cedri (strain Cc).